A 257-amino-acid chain; its full sequence is Tryptophan synthase alpha chain (257 aa).

Active-site proton acceptor residues include E51 and D62.

Belongs to the TrpA family. Tetramer of two alpha and two beta chains.

The catalysed reaction is (1S,2R)-1-C-(indol-3-yl)glycerol 3-phosphate + L-serine = D-glyceraldehyde 3-phosphate + L-tryptophan + H2O. Its pathway is amino-acid biosynthesis; L-tryptophan biosynthesis; L-tryptophan from chorismate: step 5/5. Its function is as follows. The alpha subunit is responsible for the aldol cleavage of indoleglycerol phosphate to indole and glyceraldehyde 3-phosphate. In Nitratidesulfovibrio vulgaris (strain DP4) (Desulfovibrio vulgaris), this protein is Tryptophan synthase alpha chain.